The chain runs to 177 residues: Large ribosomal subunit protein uL5 (177 aa).

Belongs to the universal ribosomal protein uL5 family. Part of the 50S ribosomal subunit; part of the 5S rRNA/L5/L18/L25 subcomplex. Contacts the 5S rRNA and the P site tRNA. Forms a bridge to the 30S subunit in the 70S ribosome.

This is one of the proteins that bind and probably mediate the attachment of the 5S RNA into the large ribosomal subunit, where it forms part of the central protuberance. In the 70S ribosome it contacts protein S13 of the 30S subunit (bridge B1b), connecting the 2 subunits; this bridge is implicated in subunit movement. Contacts the P site tRNA; the 5S rRNA and some of its associated proteins might help stabilize positioning of ribosome-bound tRNAs. This is Large ribosomal subunit protein uL5 from Wolbachia pipientis wMel.